A 458-amino-acid chain; its full sequence is tRNA modification GTPase MnmE (458 aa).

(6S)-5-formyl-5,6,7,8-tetrahydrofolate is bound by residues Arg22, Glu84, and Arg123. In terms of domain architecture, TrmE-type G spans 220–379 (GIATAIIGRP…LEKAIADLFF (160 aa)). Asn230 is a K(+) binding site. GTP-binding positions include 230–235 (NVGKSS), 249–255 (TDIAGTT), and 274–277 (DTAG). Ser234 is a binding site for Mg(2+). K(+)-binding residues include Thr249, Ile251, and Thr254. Thr255 serves as a coordination point for Mg(2+). Lys458 lines the (6S)-5-formyl-5,6,7,8-tetrahydrofolate pocket.

It belongs to the TRAFAC class TrmE-Era-EngA-EngB-Septin-like GTPase superfamily. TrmE GTPase family. Homodimer. Heterotetramer of two MnmE and two MnmG subunits. Requires K(+) as cofactor.

It localises to the cytoplasm. Exhibits a very high intrinsic GTPase hydrolysis rate. Involved in the addition of a carboxymethylaminomethyl (cmnm) group at the wobble position (U34) of certain tRNAs, forming tRNA-cmnm(5)s(2)U34. This is tRNA modification GTPase MnmE from Bacillus cereus (strain ZK / E33L).